Here is a 648-residue protein sequence, read N- to C-terminus: PAN2-PAN3 deadenylation complex subunit PAN3 (648 aa).

Positions 1–24 are disordered; sequence MAATRYPPNDLRRQVGSPRSKGRE. The C3H1-type zinc finger occupies 24–53; that stretch reads ENKDTLCRNILIYGNCRYEDQGCTFNHDQN. Positions 244–506 are pseudokinase domain; it reads QVMPNSGLPQ…SIENFISGIA (263 aa). Residues Arg295, 345 to 352, and 404 to 405 contribute to the ATP site; these read DYHPLSKT and SK. Residues 507 to 545 are a coiled coil; the sequence is THMTAFFDLALQDGDEKQFHLARELENGRIARSMMKLMT. Residues 546–648 form a knob domain region; it reads IIERAEPGGA…SKTGAPGANN (103 aa).

It belongs to the protein kinase superfamily. PAN3 family. As to quaternary structure, homodimer. Forms a heterotrimer with a catalytic subunit PAN2 to form the poly(A)-nuclease (PAN) deadenylation complex. Interacts (via PAM-2 motif) with poly(A)-binding protein PAB1 (via PABC domain), conferring substrate specificity of the enzyme complex.

The protein resides in the cytoplasm. Regulatory subunit of the poly(A)-nuclease (PAN) deadenylation complex, one of two cytoplasmic mRNA deadenylases involved in mRNA turnover. PAN specifically shortens poly(A) tails of RNA and the activity is stimulated by poly(A)-binding protein PAB1. PAN deadenylation is followed by rapid degradation of the shortened mRNA tails by the CCR4-NOT complex. Deadenylated mRNAs are then degraded by two alternative mechanisms, namely exosome-mediated 3'-5' exonucleolytic degradation, or deadenylation-dependent mRNA decaping and subsequent 5'-3' exonucleolytic degradation by XRN1. May also be involved in post-transcriptional maturation of mRNA poly(A) tails. PAN3 acts as a positive regulator for PAN activity, recruiting the catalytic subunit PAN2 to mRNA via its interaction with RNA and with PAB1. The chain is PAN2-PAN3 deadenylation complex subunit PAN3 from Chaetomium globosum (strain ATCC 6205 / CBS 148.51 / DSM 1962 / NBRC 6347 / NRRL 1970) (Soil fungus).